The following is a 901-amino-acid chain: Aconitate hydratase A (901 aa).

Residues cysteine 443, cysteine 509, and cysteine 512 each contribute to the [4Fe-4S] cluster site.

This sequence belongs to the aconitase/IPM isomerase family. In terms of assembly, monomer. Requires [4Fe-4S] cluster as cofactor.

It catalyses the reaction citrate = D-threo-isocitrate. The catalysed reaction is (2S,3R)-3-hydroxybutane-1,2,3-tricarboxylate = 2-methyl-cis-aconitate + H2O. It functions in the pathway carbohydrate metabolism; tricarboxylic acid cycle; isocitrate from oxaloacetate: step 2/2. Its pathway is organic acid metabolism; propanoate degradation. In terms of biological role, involved in the catabolism of short chain fatty acids (SCFA) via the tricarboxylic acid (TCA)(acetyl degradation route) and probably the 2-methylcitrate cycle I (propionate degradation route). Catalyzes the reversible isomerization of citrate to isocitrate via cis-aconitate. Could catalyze the hydration of 2-methyl-cis-aconitate to yield (2R,3S)-2-methylisocitrate. The apo form of AcnA functions as a RNA-binding regulatory protein. This chain is Aconitate hydratase A (acnA), found in Staphylococcus aureus (strain MRSA252).